The sequence spans 134 residues: MSWQAYVDDHLMCDIEGHEGHRLTAAAIVGHDGSVWAQSATFPQFKPEEMNGITTDFNEPGHLAPTGLHLGGTKYMVIQGEAGAVIRGKKGSGGITIKKTGQALVCGIYEEPVTPGQCNMVVERLGDYLLEQGL.

C13 and C118 form a disulfide bridge. Positions 84 to 100 (AVIRGKKGSGGITIKKT) match the Involved in PIP2 interaction motif. T114 bears the Phosphothreonine mark.

This sequence belongs to the profilin family. Occurs in many kinds of cells as a complex with monomeric actin in a 1:1 ratio. Post-translationally, phosphorylated by MAP kinases.

It is found in the cytoplasm. Its subcellular location is the cytoskeleton. Its function is as follows. Binds to actin and affects the structure of the cytoskeleton. At high concentrations, profilin prevents the polymerization of actin, whereas it enhances it at low concentrations. The chain is Profilin-2 from Olea europaea (Common olive).